Here is a 261-residue protein sequence, read N- to C-terminus: Hemin import ATP-binding protein HmuV (261 aa).

Residues 5-241 enclose the ABC transporter domain; sequence LTANAASFAI…DLLARVFDVD (237 aa). 37–44 is a binding site for ATP; the sequence is GPNGAGKS.

It belongs to the ABC transporter superfamily. Heme (hemin) importer (TC 3.A.1.14.5) family. In terms of assembly, the complex is composed of two ATP-binding proteins (HmuV), two transmembrane proteins (HmuU) and a solute-binding protein (HmuT).

The protein resides in the cell inner membrane. Its function is as follows. Part of the ABC transporter complex HmuTUV involved in hemin import. Responsible for energy coupling to the transport system. The protein is Hemin import ATP-binding protein HmuV of Rhodopseudomonas palustris (strain BisB5).